Reading from the N-terminus, the 665-residue chain is Transketolase (665 aa).

Histidine 26 contributes to the substrate binding site. Residues histidine 66 and 114–116 contribute to the thiamine diphosphate site; that span reads GPL. The disordered stretch occupies residues 94-114; sequence NSKTPGHPETGETPGVETTTG. Over residues 97–114 the composition is skewed to low complexity; that stretch reads TPGHPETGETPGVETTTG. Aspartate 155 lines the Mg(2+) pocket. Positions 156 and 185 each coordinate thiamine diphosphate. Mg(2+)-binding residues include asparagine 185 and isoleucine 187. Substrate contacts are provided by histidine 261, arginine 358, and serine 385. A thiamine diphosphate-binding site is contributed by histidine 261. The active-site Proton donor is the glutamate 411. Phenylalanine 437 is a thiamine diphosphate binding site. Substrate is bound by residues histidine 461, aspartate 469, and arginine 520.

This sequence belongs to the transketolase family. As to quaternary structure, homodimer. The cofactor is Mg(2+). Ca(2+) is required as a cofactor. Requires Mn(2+) as cofactor. Co(2+) serves as cofactor. It depends on thiamine diphosphate as a cofactor.

The enzyme catalyses D-sedoheptulose 7-phosphate + D-glyceraldehyde 3-phosphate = aldehydo-D-ribose 5-phosphate + D-xylulose 5-phosphate. Functionally, catalyzes the transfer of a two-carbon ketol group from a ketose donor to an aldose acceptor, via a covalent intermediate with the cofactor thiamine pyrophosphate. This Buchnera aphidicola subsp. Acyrthosiphon pisum (strain APS) (Acyrthosiphon pisum symbiotic bacterium) protein is Transketolase (tkt).